Here is a 303-residue protein sequence, read N- to C-terminus: Holdfast attachment protein D (303 aa).

A compositionally biased stretch (polar residues) spans 266-281; sequence SARSTMSGPKSCSTTF. The interval 266 to 303 is disordered; sequence SARSTMSGPKSCSTTFRPIRAAASRRPPASAGTRAMTR. Residues 282-303 are compositionally biased toward low complexity; sequence RPIRAAASRRPPASAGTRAMTR.

Its subcellular location is the cell outer membrane. Functionally, involved in attachment of the holdfast to the cell. The holdfast is a structure that allows the bacteria to firmly adhere to surfaces. This is Holdfast attachment protein D (hfaD) from Caulobacter vibrioides (strain ATCC 19089 / CIP 103742 / CB 15) (Caulobacter crescentus).